The sequence spans 139 residues: Large ribosomal subunit protein mL42 (139 aa).

The N-terminal 32 residues, 1-32, are a transit peptide targeting the mitochondrion; the sequence is MAVAAVKWVMSKRTILKHLFPVQNGALYCVCH.

Belongs to the mitochondrion-specific ribosomal protein mL42 family. In terms of assembly, component of the mitochondrial ribosome large subunit (39S) which comprises a 16S rRNA and about 50 distinct proteins. Component of the mitochondrial ribosome small subunit (28S) which comprises a 12S rRNA and about 30 distinct proteins.

The protein resides in the mitochondrion. This Pongo abelii (Sumatran orangutan) protein is Large ribosomal subunit protein mL42 (MRPL42).